Reading from the N-terminus, the 371-residue chain is tRNA (guanine(26)-N(2))-dimethyltransferase (371 aa).

The region spanning 4-368 is the Trm1 methyltransferase domain; that stretch reads VEVTEGRTRF…APLPVLEKVV (365 aa). 5 residues coordinate S-adenosyl-L-methionine: arginine 41, arginine 66, aspartate 82, aspartate 108, and alanine 109. Zn(2+)-binding residues include cysteine 237, cysteine 240, cysteine 256, and cysteine 259.

It belongs to the class I-like SAM-binding methyltransferase superfamily. Trm1 family.

It carries out the reaction guanosine(26) in tRNA + 2 S-adenosyl-L-methionine = N(2)-dimethylguanosine(26) in tRNA + 2 S-adenosyl-L-homocysteine + 2 H(+). In terms of biological role, dimethylates a single guanine residue at position 26 of a number of tRNAs using S-adenosyl-L-methionine as donor of the methyl groups. This is tRNA (guanine(26)-N(2))-dimethyltransferase from Methanoculleus marisnigri (strain ATCC 35101 / DSM 1498 / JR1).